Consider the following 403-residue polypeptide: S-adenosylmethionine synthase (403 aa).

Residue H16 participates in ATP binding. Position 18 (D18) interacts with Mg(2+). E44 provides a ligand contact to K(+). Residues E57 and Q100 each contribute to the L-methionine site. Residues 100–110 (QSPDIAQGVDR) form a flexible loop region. A disordered region spans residues 106-126 (QGVDRSYESRSGSASTDAHDL). Residues 176–178 (DGK), 248–249 (KF), D257, 263–264 (RK), A280, and K284 each bind ATP. L-methionine is bound at residue D257. Residue K288 coordinates L-methionine.

It belongs to the AdoMet synthase family. Homotetramer; dimer of dimers. The cofactor is Mg(2+). It depends on K(+) as a cofactor.

It is found in the cytoplasm. The catalysed reaction is L-methionine + ATP + H2O = S-adenosyl-L-methionine + phosphate + diphosphate. It functions in the pathway amino-acid biosynthesis; S-adenosyl-L-methionine biosynthesis; S-adenosyl-L-methionine from L-methionine: step 1/1. In terms of biological role, catalyzes the formation of S-adenosylmethionine (AdoMet) from methionine and ATP. The overall synthetic reaction is composed of two sequential steps, AdoMet formation and the subsequent tripolyphosphate hydrolysis which occurs prior to release of AdoMet from the enzyme. The polypeptide is S-adenosylmethionine synthase (Clavibacter sepedonicus (Clavibacter michiganensis subsp. sepedonicus)).